Consider the following 397-residue polypeptide: Argininosuccinate synthase (397 aa).

Residue 9–17 (AYSGGLDTS) participates in ATP binding. Position 86 (Tyr86) interacts with L-citrulline. Position 116 (Gly116) interacts with ATP. L-aspartate-binding residues include Thr118, Asn122, and Asp123. Asn122 contributes to the L-citrulline binding site. 4 residues coordinate L-citrulline: Arg126, Ser174, Glu259, and Tyr271.

Belongs to the argininosuccinate synthase family. Type 1 subfamily. As to quaternary structure, homotetramer.

It localises to the cytoplasm. It catalyses the reaction L-citrulline + L-aspartate + ATP = 2-(N(omega)-L-arginino)succinate + AMP + diphosphate + H(+). Its pathway is amino-acid biosynthesis; L-arginine biosynthesis; L-arginine from L-ornithine and carbamoyl phosphate: step 2/3. In Lactococcus lactis subsp. cremoris (strain MG1363), this protein is Argininosuccinate synthase.